The primary structure comprises 128 residues: Myelin basic protein (128 aa).

2 disordered regions span residues 1–24 and 82–128; these read AGGAHFFGQEGSRKVPEKGKEPAT and TDGQ…PARR. 2 stretches are compositionally biased toward basic and acidic residues: residues 11-23 and 96-107; these read GSRKVPEKGKEPA and KSREAYRGRKDG.

This sequence belongs to the myelin basic protein family. The N-terminus is blocked.

It is found in the myelin membrane. Its function is as follows. This protein may function to maintain proper structure of myelin. This chain is Myelin basic protein (MBP), found in Carcharhinus obscurus (Dusky shark).